The primary structure comprises 261 residues: Acidic leucine-rich nuclear phosphoprotein 32 family member B (261 aa).

LRR repeat units lie at residues 16 to 40 (PAAV…LTAE), 43 to 64 (NLEF…PKLP), 65 to 87 (KLKK…AEKL), and 89 to 110 (NLTH…EPLK). Lys-86 carries the post-translational modification N6-acetyllysine. Residues 123–161 (CEVTNLNDYRESVFKLLPQLTYLDGYDREDREAPDSDAE) enclose the LRRCT domain. Residues 149–261 (DREDREAPDS…RETDDEGEDD (113 aa)) form a disordered region. Over residues 157 to 243 (DSDAEVDGVD…DEDEDEEEEE (87 aa)) the composition is skewed to acidic residues. Ser-158 carries the post-translational modification Phosphoserine. The span at 244–254 (SGKGEGRKRET) shows a compositional bias: basic and acidic residues. Thr-254 carries the post-translational modification Phosphothreonine.

This sequence belongs to the ANP32 family. Monomer. Interacts with histones H3 and H4. Post-translationally, some glutamate residues are glycylated by TTLL8. This modification occurs exclusively on glutamate residues and results in a glycine chain on the gamma-carboxyl group.

It is found in the nucleus. Functionally, multifunctional protein working as a cell cycle progression factor as well as a cell survival factor. Required for the progression from the G1 to the S phase. Anti-apoptotic protein which functions as a caspase-3 inhibitor. Has no phosphatase 2A (PP2A) inhibitor activity. Exhibits histone chaperone properties, stimulating core histones to assemble into a nucleosome. In Ovis aries (Sheep), this protein is Acidic leucine-rich nuclear phosphoprotein 32 family member B (ANP32B).